Consider the following 392-residue polypeptide: Y' element ATP-dependent helicase YFL066C (392 aa).

The region spanning 1–175 is the Helicase ATP-binding domain; sequence MADTPSVAVQ…LQRIGLTGLA (175 aa). 11–18 provides a ligand contact to ATP; sequence APPGYGKT. The Helicase C-terminal domain maps to 232–381; that stretch reads KLLLALFEIE…EFYGLESKKG (150 aa).

Belongs to the helicase family. Yeast subtelomeric Y' repeat subfamily.

Catalyzes DNA unwinding and is involved in telomerase-independent telomere maintenance. This Saccharomyces cerevisiae (strain ATCC 204508 / S288c) (Baker's yeast) protein is Y' element ATP-dependent helicase YFL066C.